The primary structure comprises 88 residues: MLDKEKKAEIINKFKLHDTDTGSPEVQIALLTERINNLNAHLQVHKKDHHSRRGLLKMVGQRRALLNYLMKTDMERYRAIIEKLDLRK.

Belongs to the universal ribosomal protein uS15 family. Part of the 30S ribosomal subunit. Forms a bridge to the 50S subunit in the 70S ribosome, contacting the 23S rRNA.

In terms of biological role, one of the primary rRNA binding proteins, it binds directly to 16S rRNA where it helps nucleate assembly of the platform of the 30S subunit by binding and bridging several RNA helices of the 16S rRNA. Forms an intersubunit bridge (bridge B4) with the 23S rRNA of the 50S subunit in the ribosome. The polypeptide is Small ribosomal subunit protein uS15 (Thermoanaerobacter pseudethanolicus (strain ATCC 33223 / 39E) (Clostridium thermohydrosulfuricum)).